We begin with the raw amino-acid sequence, 80 residues long: Large ribosomal subunit protein uL29 (80 aa).

It belongs to the universal ribosomal protein uL29 family.

The chain is Large ribosomal subunit protein uL29 from Mycobacterium marinum (strain ATCC BAA-535 / M).